Reading from the N-terminus, the 509-residue chain is Histidine ammonia-lyase (509 aa).

Positions 142–144 form a cross-link, 5-imidazolinone (Ala-Gly); sequence ASG. Position 143 is a 2,3-didehydroalanine (Ser) (Ser143).

This sequence belongs to the PAL/histidase family. In terms of processing, contains an active site 4-methylidene-imidazol-5-one (MIO), which is formed autocatalytically by cyclization and dehydration of residues Ala-Ser-Gly.

Its subcellular location is the cytoplasm. It carries out the reaction L-histidine = trans-urocanate + NH4(+). It functions in the pathway amino-acid degradation; L-histidine degradation into L-glutamate; N-formimidoyl-L-glutamate from L-histidine: step 1/3. The protein is Histidine ammonia-lyase of Sphingopyxis alaskensis (strain DSM 13593 / LMG 18877 / RB2256) (Sphingomonas alaskensis).